A 393-amino-acid polypeptide reads, in one-letter code: MSQISSNLLRNTVQNGKFGCLKNSIQCKHTAANPLEKIRERLESGPSFQDFVQNPSYNRDDWTDYEGKLRREKGENDRLRLPPWLKTKIPMGKNFSRIKDQLRELKLATVCEEAKCPNIGECWGGGEHGTQTATIMLMGDTCTRGCRFCSVKTARVPPPLDPAEPTNTASAIASWGLDYIVLTSVDRDDLPDGGSNHIAATIREIKRQNPRIFVECLAPDFRGDLECVKVVAQSGLDVYAHNIETVEALTPFVRDRRARYRQSLDVLRSIKEINPSMITKTSIMLGLGETDEQIEQTMKDLRSVGVDCLTLGQYMQPTKRHLKVIEYVTPEKFKHWETRGNELGFLYTASGPLVRSSYKAGEFFITSILKNRAEEAERRKEAAGGQDTKTEQT.

[4Fe-4S] cluster contacts are provided by Cys-111, Cys-116, Cys-122, Cys-142, Cys-146, Cys-149, and Ser-357. One can recognise a Radical SAM core domain in the interval 127-346; sequence EHGTQTATIM…ETRGNELGFL (220 aa).

It belongs to the radical SAM superfamily. Lipoyl synthase family. The cofactor is [4Fe-4S] cluster.

It localises to the mitochondrion. The catalysed reaction is [[Fe-S] cluster scaffold protein carrying a second [4Fe-4S](2+) cluster] + N(6)-octanoyl-L-lysyl-[protein] + 2 oxidized [2Fe-2S]-[ferredoxin] + 2 S-adenosyl-L-methionine + 4 H(+) = [[Fe-S] cluster scaffold protein] + N(6)-[(R)-dihydrolipoyl]-L-lysyl-[protein] + 4 Fe(3+) + 2 hydrogen sulfide + 2 5'-deoxyadenosine + 2 L-methionine + 2 reduced [2Fe-2S]-[ferredoxin]. It participates in protein modification; protein lipoylation via endogenous pathway; protein N(6)-(lipoyl)lysine from octanoyl-[acyl-carrier-protein]: step 2/2. Catalyzes the radical-mediated insertion of two sulfur atoms into the C-6 and C-8 positions of the octanoyl moiety bound to the lipoyl domains of lipoate-dependent enzymes, thereby converting the octanoylated domains into lipoylated derivatives. This Aedes aegypti (Yellowfever mosquito) protein is Lipoyl synthase, mitochondrial.